Here is a 54-residue protein sequence, read N- to C-terminus: Large ribosomal subunit protein bL33A (54 aa).

It belongs to the bacterial ribosomal protein bL33 family.

This is Large ribosomal subunit protein bL33A from Saccharopolyspora erythraea (strain ATCC 11635 / DSM 40517 / JCM 4748 / NBRC 13426 / NCIMB 8594 / NRRL 2338).